We begin with the raw amino-acid sequence, 200 residues long: Pyridoxal 5'-phosphate synthase subunit PdxT (200 aa).

52–54 (GES) contributes to the L-glutamine binding site. C84 functions as the Nucleophile in the catalytic mechanism. L-glutamine contacts are provided by residues R116 and 145–146 (IR). Active-site charge relay system residues include H181 and E183.

The protein belongs to the glutaminase PdxT/SNO family. As to quaternary structure, in the presence of PdxS, forms a dodecamer of heterodimers. Only shows activity in the heterodimer.

The enzyme catalyses aldehydo-D-ribose 5-phosphate + D-glyceraldehyde 3-phosphate + L-glutamine = pyridoxal 5'-phosphate + L-glutamate + phosphate + 3 H2O + H(+). It catalyses the reaction L-glutamine + H2O = L-glutamate + NH4(+). It functions in the pathway cofactor biosynthesis; pyridoxal 5'-phosphate biosynthesis. In terms of biological role, catalyzes the hydrolysis of glutamine to glutamate and ammonia as part of the biosynthesis of pyridoxal 5'-phosphate. The resulting ammonia molecule is channeled to the active site of PdxS. This chain is Pyridoxal 5'-phosphate synthase subunit PdxT, found in Saccharolobus islandicus (strain Y.G.57.14 / Yellowstone #1) (Sulfolobus islandicus).